A 397-amino-acid polypeptide reads, in one-letter code: MSESVHTNTSLWSKGMKAVIVAQFLSAFGDNALLFATLALLKAQFYPEWSQPILQMVFVGAYILFAPFVGQVADSFAKGRVMMFANGLKLLGAASICFGINPFLGYTLVGVGAAAYSPAKYGILGELTTGSKLVKANGLMEASTIAAILLGSVAGGVLADWHVLVALAACALAYGGAVVANIYIPKLAAARPGQSWNLINMTRSFLNACTSLWRNGETRFSLVGTSLFWGAGVTLRFLLVLWVPVALGITDNATPTYLNAMVAIGIVVGAGAAAKLVTLETMSRCMPAGILIGVVVLIFSLQHELLPAYALLMLIGVMGGFFVVPLNALLQERGKKSVGAGNAIAVQNLGENSAMLLMLGIYSLAVMVGIPVVPIGIGFGALFALAITALWIWQRRH.

Residues 1–17 are Periplasmic-facing; the sequence is MSESVHTNTSLWSKGMK. The helical transmembrane segment at 18–38 threads the bilayer; the sequence is AVIVAQFLSAFGDNALLFATL. Residues 39 to 52 are Cytoplasmic-facing; the sequence is ALLKAQFYPEWSQP. The helical transmembrane segment at 53-73 threads the bilayer; the sequence is ILQMVFVGAYILFAPFVGQVA. Residues 74–90 are Periplasmic-facing; sequence DSFAKGRVMMFANGLKL. The chain crosses the membrane as a helical span at residues 91–111; that stretch reads LGAASICFGINPFLGYTLVGV. Residues 112–144 lie on the Cytoplasmic side of the membrane; the sequence is GAAAYSPAKYGILGELTTGSKLVKANGLMEAST. A helical transmembrane segment spans residues 145 to 165; that stretch reads IAAILLGSVAGGVLADWHVLV. Ala166 is a topological domain (periplasmic). Residues 167-187 traverse the membrane as a helical segment; sequence LAACALAYGGAVVANIYIPKL. The Cytoplasmic segment spans residues 188–226; that stretch reads AAARPGQSWNLINMTRSFLNACTSLWRNGETRFSLVGTS. Residues 227–247 traverse the membrane as a helical segment; that stretch reads LFWGAGVTLRFLLVLWVPVAL. Residues 248 to 256 are Periplasmic-facing; it reads GITDNATPT. A helical membrane pass occupies residues 257–277; sequence YLNAMVAIGIVVGAGAAAKLV. Residues 278–280 lie on the Cytoplasmic side of the membrane; it reads TLE. Residues 281 to 301 form a helical membrane-spanning segment; the sequence is TMSRCMPAGILIGVVVLIFSL. Residues 302-304 lie on the Periplasmic side of the membrane; it reads QHE. A helical transmembrane segment spans residues 305–325; that stretch reads LLPAYALLMLIGVMGGFFVVP. Residues 326-343 lie on the Cytoplasmic side of the membrane; that stretch reads LNALLQERGKKSVGAGNA. A helical membrane pass occupies residues 344-364; the sequence is IAVQNLGENSAMLLMLGIYSL. Over 365–366 the chain is Periplasmic; sequence AV. The helical transmembrane segment at 367-387 threads the bilayer; that stretch reads MVGIPVVPIGIGFGALFALAI. Residues 388-397 are Cytoplasmic-facing; that stretch reads TALWIWQRRH.

Belongs to the major facilitator superfamily. LplT (TC 2.A.1.42) family.

The protein localises to the cell inner membrane. In terms of biological role, catalyzes the facilitated diffusion of 2-acyl-glycero-3-phosphoethanolamine (2-acyl-GPE) into the cell. This is Lysophospholipid transporter LplT from Shigella sonnei (strain Ss046).